Here is a 273-residue protein sequence, read N- to C-terminus: Formamidopyrimidine-DNA glycosylase (273 aa).

Pro2 serves as the catalytic Schiff-base intermediate with DNA. Glu3 acts as the Proton donor in catalysis. The active-site Proton donor; for beta-elimination activity is the Lys60. The DNA site is built by His94, Arg113, and Arg154. The FPG-type zinc finger occupies 239–273; sequence NAYDREGQPCPRCGATIIKTVVAQRGTHYCPECQR. The active-site Proton donor; for delta-elimination activity is the Arg263.

The protein belongs to the FPG family. Monomer. Requires Zn(2+) as cofactor.

It catalyses the reaction Hydrolysis of DNA containing ring-opened 7-methylguanine residues, releasing 2,6-diamino-4-hydroxy-5-(N-methyl)formamidopyrimidine.. The catalysed reaction is 2'-deoxyribonucleotide-(2'-deoxyribose 5'-phosphate)-2'-deoxyribonucleotide-DNA = a 3'-end 2'-deoxyribonucleotide-(2,3-dehydro-2,3-deoxyribose 5'-phosphate)-DNA + a 5'-end 5'-phospho-2'-deoxyribonucleoside-DNA + H(+). Its function is as follows. Involved in base excision repair of DNA damaged by oxidation or by mutagenic agents. Acts as a DNA glycosylase that recognizes and removes damaged bases. Has a preference for oxidized purines, such as 7,8-dihydro-8-oxoguanine (8-oxoG). Has AP (apurinic/apyrimidinic) lyase activity and introduces nicks in the DNA strand. Cleaves the DNA backbone by beta-delta elimination to generate a single-strand break at the site of the removed base with both 3'- and 5'-phosphates. This chain is Formamidopyrimidine-DNA glycosylase, found in Roseiflexus sp. (strain RS-1).